The primary structure comprises 597 residues: Probable translation initiation factor IF-2 (597 aa).

In terms of domain architecture, tr-type G spans 4-221 (IRQPIIAVLG…LIAGLSQKYL (218 aa)). Positions 13–20 (GHVDHGKT) are G1. A GTP-binding site is contributed by 13 to 20 (GHVDHGKT). The segment at 38-42 (GITQH) is G2. The interval 77–80 (DTPG) is G3. Residues 77 to 81 (DTPGH) and 131 to 134 (NKID) each bind GTP. The interval 131–134 (NKID) is G4. The segment at 199–201 (SAK) is G5.

The protein belongs to the TRAFAC class translation factor GTPase superfamily. Classic translation factor GTPase family. IF-2 subfamily.

Function in general translation initiation by promoting the binding of the formylmethionine-tRNA to ribosomes. Seems to function along with eIF-2. This Thermococcus onnurineus (strain NA1) protein is Probable translation initiation factor IF-2.